Here is a 325-residue protein sequence, read N- to C-terminus: Transaldolase (325 aa).

The active-site Schiff-base intermediate with substrate is Lys125.

Belongs to the transaldolase family. Type 2 subfamily.

The protein localises to the cytoplasm. The catalysed reaction is D-sedoheptulose 7-phosphate + D-glyceraldehyde 3-phosphate = D-erythrose 4-phosphate + beta-D-fructose 6-phosphate. It participates in carbohydrate degradation; pentose phosphate pathway; D-glyceraldehyde 3-phosphate and beta-D-fructose 6-phosphate from D-ribose 5-phosphate and D-xylulose 5-phosphate (non-oxidative stage): step 2/3. Functionally, transaldolase is important for the balance of metabolites in the pentose-phosphate pathway. The chain is Transaldolase (tal) from Campylobacter jejuni subsp. jejuni serotype O:2 (strain ATCC 700819 / NCTC 11168).